Here is a 339-residue protein sequence, read N- to C-terminus: Phenylalanine--tRNA ligase alpha subunit (339 aa).

E250 is a binding site for Mg(2+).

It belongs to the class-II aminoacyl-tRNA synthetase family. Phe-tRNA synthetase alpha subunit type 1 subfamily. As to quaternary structure, tetramer of two alpha and two beta subunits. The cofactor is Mg(2+).

The protein resides in the cytoplasm. The catalysed reaction is tRNA(Phe) + L-phenylalanine + ATP = L-phenylalanyl-tRNA(Phe) + AMP + diphosphate + H(+). The sequence is that of Phenylalanine--tRNA ligase alpha subunit from Flavobacterium psychrophilum (strain ATCC 49511 / DSM 21280 / CIP 103535 / JIP02/86).